Reading from the N-terminus, the 338-residue chain is Ketol-acid reductoisomerase (NADP(+)) (338 aa).

The KARI N-terminal Rossmann domain maps to 1 to 181 (MKIYYDKDCN…GGGRAGIIET (181 aa)). Residues 24 to 27 (YGSQ), Lys-47, Ser-50, Ser-52, and 82 to 85 (DEIQ) contribute to the NADP(+) site. His-107 is a catalytic residue. Residue Gly-133 coordinates NADP(+). The region spanning 182-327 (SFKEETETDL…ARLRSMMSWI (146 aa)) is the KARI C-terminal knotted domain. 4 residues coordinate Mg(2+): Asp-190, Glu-194, Glu-226, and Glu-230. Ser-251 lines the substrate pocket.

It belongs to the ketol-acid reductoisomerase family. Mg(2+) is required as a cofactor.

It carries out the reaction (2R)-2,3-dihydroxy-3-methylbutanoate + NADP(+) = (2S)-2-acetolactate + NADPH + H(+). It catalyses the reaction (2R,3R)-2,3-dihydroxy-3-methylpentanoate + NADP(+) = (S)-2-ethyl-2-hydroxy-3-oxobutanoate + NADPH + H(+). The protein operates within amino-acid biosynthesis; L-isoleucine biosynthesis; L-isoleucine from 2-oxobutanoate: step 2/4. It participates in amino-acid biosynthesis; L-valine biosynthesis; L-valine from pyruvate: step 2/4. In terms of biological role, involved in the biosynthesis of branched-chain amino acids (BCAA). Catalyzes an alkyl-migration followed by a ketol-acid reduction of (S)-2-acetolactate (S2AL) to yield (R)-2,3-dihydroxy-isovalerate. In the isomerase reaction, S2AL is rearranged via a Mg-dependent methyl migration to produce 3-hydroxy-3-methyl-2-ketobutyrate (HMKB). In the reductase reaction, this 2-ketoacid undergoes a metal-dependent reduction by NADPH to yield (R)-2,3-dihydroxy-isovalerate. The sequence is that of Ketol-acid reductoisomerase (NADP(+)) from Geobacter sulfurreducens (strain ATCC 51573 / DSM 12127 / PCA).